A 479-amino-acid polypeptide reads, in one-letter code: Siroheme synthase (479 aa).

The segment at 1–202 (MNYLPIFLDL…GRDSEAEAQL (202 aa)) is precorrin-2 dehydrogenase /sirohydrochlorin ferrochelatase. Residues 22–23 (ET) and 43–44 (PA) contribute to the NAD(+) site. Residue serine 128 is modified to Phosphoserine. The segment at 217-479 (GEVYLVGAGP…TPLEAPDHLA (263 aa)) is uroporphyrinogen-III C-methyltransferase. Proline 226 is a binding site for S-adenosyl-L-methionine. Residue aspartate 249 is the Proton acceptor of the active site. Lysine 271 serves as the catalytic Proton donor. S-adenosyl-L-methionine contacts are provided by residues 302–304 (GGD), isoleucine 307, 332–333 (TA), methionine 384, and glycine 413.

This sequence in the N-terminal section; belongs to the precorrin-2 dehydrogenase / sirohydrochlorin ferrochelatase family. The protein in the C-terminal section; belongs to the precorrin methyltransferase family.

It carries out the reaction uroporphyrinogen III + 2 S-adenosyl-L-methionine = precorrin-2 + 2 S-adenosyl-L-homocysteine + H(+). The catalysed reaction is precorrin-2 + NAD(+) = sirohydrochlorin + NADH + 2 H(+). It catalyses the reaction siroheme + 2 H(+) = sirohydrochlorin + Fe(2+). It participates in cofactor biosynthesis; adenosylcobalamin biosynthesis; precorrin-2 from uroporphyrinogen III: step 1/1. The protein operates within cofactor biosynthesis; adenosylcobalamin biosynthesis; sirohydrochlorin from precorrin-2: step 1/1. Its pathway is porphyrin-containing compound metabolism; siroheme biosynthesis; precorrin-2 from uroporphyrinogen III: step 1/1. It functions in the pathway porphyrin-containing compound metabolism; siroheme biosynthesis; siroheme from sirohydrochlorin: step 1/1. It participates in porphyrin-containing compound metabolism; siroheme biosynthesis; sirohydrochlorin from precorrin-2: step 1/1. Functionally, multifunctional enzyme that catalyzes the SAM-dependent methylations of uroporphyrinogen III at position C-2 and C-7 to form precorrin-2 via precorrin-1. Then it catalyzes the NAD-dependent ring dehydrogenation of precorrin-2 to yield sirohydrochlorin. Finally, it catalyzes the ferrochelation of sirohydrochlorin to yield siroheme. The polypeptide is Siroheme synthase (Thiobacillus denitrificans (strain ATCC 25259 / T1)).